A 396-amino-acid polypeptide reads, in one-letter code: Argininosuccinate synthase (396 aa).

9-17 is a binding site for ATP; it reads AYSGGLDTS. Position 85 (tyrosine 85) interacts with L-citrulline. Glycine 115 lines the ATP pocket. L-aspartate-binding residues include threonine 117, asparagine 121, and aspartate 122. Residue asparagine 121 coordinates L-citrulline. L-citrulline-binding residues include arginine 125, serine 173, glutamate 258, and tyrosine 270.

The protein belongs to the argininosuccinate synthase family. Type 1 subfamily. In terms of assembly, homotetramer.

It is found in the cytoplasm. It carries out the reaction L-citrulline + L-aspartate + ATP = 2-(N(omega)-L-arginino)succinate + AMP + diphosphate + H(+). Its pathway is amino-acid biosynthesis; L-arginine biosynthesis; L-arginine from L-ornithine and carbamoyl phosphate: step 2/3. The polypeptide is Argininosuccinate synthase (Streptococcus agalactiae serotype V (strain ATCC BAA-611 / 2603 V/R)).